The chain runs to 522 residues: Echinocystic acid 23-monooxygenase (522 aa).

The chain crosses the membrane as a helical; Signal-anchor for type II membrane protein span at residues Leu4–Met24. A glycan (N-linked (GlcNAc...) asparagine) is linked at Asn190. Cys470 contributes to the heme binding site.

This sequence belongs to the cytochrome P450 family. Heme is required as a cofactor. Mainly expressed in flowers and flower buds, to a lesser extent in young leaves and, at low levels, in old leaves, stems and roots.

The protein resides in the membrane. Its pathway is secondary metabolite biosynthesis; terpenoid biosynthesis. Its function is as follows. Component of the oleanane-type triterpene saponins (e.g. saponarioside A and saponarioside B) biosynthetic pathway, leading to the production of natural products with detergent properties used as traditional sources of soap. An oxidoreductase that facilitates the oxidation of the methyl group to a carboxyl group at the C-23 position of echinocystic acid, resulting in the formation of quillaic acid (QA). The protein is Echinocystic acid 23-monooxygenase of Saponaria officinalis (Common soapwort).